The chain runs to 307 residues: 4-hydroxythreonine-4-phosphate dehydrogenase (307 aa).

Substrate contacts are provided by His-126 and Thr-127. His-156, His-195, and His-251 together coordinate a divalent metal cation. Positions 259, 268, and 277 each coordinate substrate.

Belongs to the PdxA family. As to quaternary structure, homodimer. Zn(2+) serves as cofactor. Mg(2+) is required as a cofactor. The cofactor is Co(2+).

It localises to the cytoplasm. The enzyme catalyses 4-(phosphooxy)-L-threonine + NAD(+) = 3-amino-2-oxopropyl phosphate + CO2 + NADH. Its pathway is cofactor biosynthesis; pyridoxine 5'-phosphate biosynthesis; pyridoxine 5'-phosphate from D-erythrose 4-phosphate: step 4/5. In terms of biological role, catalyzes the NAD(P)-dependent oxidation of 4-(phosphooxy)-L-threonine (HTP) into 2-amino-3-oxo-4-(phosphooxy)butyric acid which spontaneously decarboxylates to form 3-amino-2-oxopropyl phosphate (AHAP). The sequence is that of 4-hydroxythreonine-4-phosphate dehydrogenase from Helicobacter pylori (strain P12).